The chain runs to 414 residues: Putative dipeptidase TRV_05564 (414 aa).

The N-terminal stretch at 1–20 is a signal peptide; that stretch reads MAALFVSLLALTSLVPVQGA. The Zn(2+) site is built by His45, Asp47, and Glu157. Cysteines 96 and 186 form a disulfide. Position 184 (His184) interacts with substrate. Positions 228 and 249 each coordinate Zn(2+). Substrate is bound by residues Arg260 and Asp320. An N-linked (GlcNAc...) asparagine glycan is attached at Asn392.

The protein belongs to the metallo-dependent hydrolases superfamily. Peptidase M19 family. Requires Zn(2+) as cofactor.

It catalyses the reaction an L-aminoacyl-L-amino acid + H2O = 2 an L-alpha-amino acid. Functionally, hydrolyzes a wide range of dipeptides. The protein is Putative dipeptidase TRV_05564 of Trichophyton verrucosum (strain HKI 0517).